Consider the following 157-residue polypeptide: SsrA-binding protein (157 aa).

This sequence belongs to the SmpB family.

The protein localises to the cytoplasm. In terms of biological role, required for rescue of stalled ribosomes mediated by trans-translation. Binds to transfer-messenger RNA (tmRNA), required for stable association of tmRNA with ribosomes. tmRNA and SmpB together mimic tRNA shape, replacing the anticodon stem-loop with SmpB. tmRNA is encoded by the ssrA gene; the 2 termini fold to resemble tRNA(Ala) and it encodes a 'tag peptide', a short internal open reading frame. During trans-translation Ala-aminoacylated tmRNA acts like a tRNA, entering the A-site of stalled ribosomes, displacing the stalled mRNA. The ribosome then switches to translate the ORF on the tmRNA; the nascent peptide is terminated with the 'tag peptide' encoded by the tmRNA and targeted for degradation. The ribosome is freed to recommence translation, which seems to be the essential function of trans-translation. This is SsrA-binding protein from Chlorobium chlorochromatii (strain CaD3).